Reading from the N-terminus, the 440-residue chain is Thymidine phosphorylase (440 aa).

The protein belongs to the thymidine/pyrimidine-nucleoside phosphorylase family. In terms of assembly, homodimer.

It catalyses the reaction thymidine + phosphate = 2-deoxy-alpha-D-ribose 1-phosphate + thymine. Its pathway is pyrimidine metabolism; dTMP biosynthesis via salvage pathway; dTMP from thymine: step 1/2. Functionally, the enzymes which catalyze the reversible phosphorolysis of pyrimidine nucleosides are involved in the degradation of these compounds and in their utilization as carbon and energy sources, or in the rescue of pyrimidine bases for nucleotide synthesis. The protein is Thymidine phosphorylase of Salmonella arizonae (strain ATCC BAA-731 / CDC346-86 / RSK2980).